The following is a 167-amino-acid chain: Transcription antitermination protein NusB (167 aa).

The protein belongs to the NusB family.

In terms of biological role, involved in transcription antitermination. Required for transcription of ribosomal RNA (rRNA) genes. Binds specifically to the boxA antiterminator sequence of the ribosomal RNA (rrn) operons. This is Transcription antitermination protein NusB from Nitrosomonas europaea (strain ATCC 19718 / CIP 103999 / KCTC 2705 / NBRC 14298).